The primary structure comprises 105 residues: Phosphoribosyl-AMP cyclohydrolase (105 aa).

Residue Asp72 participates in Mg(2+) binding. Cys73 lines the Zn(2+) pocket. Residues Asp74 and Asp76 each contribute to the Mg(2+) site. Zn(2+) is bound by residues Cys89 and Cys96.

It belongs to the PRA-CH family. In terms of assembly, homodimer. The cofactor is Mg(2+). Zn(2+) serves as cofactor.

It localises to the cytoplasm. It carries out the reaction 1-(5-phospho-beta-D-ribosyl)-5'-AMP + H2O = 1-(5-phospho-beta-D-ribosyl)-5-[(5-phospho-beta-D-ribosylamino)methylideneamino]imidazole-4-carboxamide. Its pathway is amino-acid biosynthesis; L-histidine biosynthesis; L-histidine from 5-phospho-alpha-D-ribose 1-diphosphate: step 3/9. Functionally, catalyzes the hydrolysis of the adenine ring of phosphoribosyl-AMP. The polypeptide is Phosphoribosyl-AMP cyclohydrolase (Listeria monocytogenes serovar 1/2a (strain ATCC BAA-679 / EGD-e)).